A 564-amino-acid chain; its full sequence is Beta-N-acetylglucosaminidase/beta-glucosidase (564 aa).

The Nucleophile role is filled by Asp283.

The protein belongs to the glycosyl hydrolase 3 family.

It catalyses the reaction Hydrolysis of terminal non-reducing N-acetyl-D-hexosamine residues in N-acetyl-beta-D-hexosaminides.. It carries out the reaction Hydrolysis of terminal, non-reducing beta-D-glucosyl residues with release of beta-D-glucose.. Catalyzes the cleavage of beta-N-acetyl-D-glucosaminides and beta-D-glucosides. Might be involved in the degradation of glucuronic acid-containing glycosaminoglycans such as hyaluronic acid. This chain is Beta-N-acetylglucosaminidase/beta-glucosidase (nag3), found in Cellulomonas fimi.